We begin with the raw amino-acid sequence, 736 residues long: Subtilisin-like protease SBT4.12 (736 aa).

Positions 1–24 (MANLAASTCLYSWLLVLLLSSVSA) are cleaved as a signal peptide. Positions 25–110 (IIDEDTQVYI…VFPNKILQLH (86 aa)) are cleaved as a propeptide — activation peptide. An Inhibitor I9 domain is found at 32–110 (VYIVYMGSLS…VFPNKILQLH (79 aa)). Positions 114–580 (SWDFMGVKEG…AGHVDPMAAL (467 aa)) constitute a Peptidase S8 domain. The active-site Charge relay system is the Asp-142. Residue Asn-173 is glycosylated (N-linked (GlcNAc...) asparagine). His-197 acts as the Charge relay system in catalysis. Residues Asn-220, Asn-381, and Asn-459 are each glycosylated (N-linked (GlcNAc...) asparagine). One can recognise a PA domain in the interval 353-437 (KYPLVYGKSA…GLKAKDFKSL (85 aa)). The active-site Charge relay system is the Ser-519. Asn-601, Asn-649, and Asn-659 each carry an N-linked (GlcNAc...) asparagine glycan.

Belongs to the peptidase S8 family. In terms of processing, the C-terminal propeptide is autocleaved. As to expression, specifically expressed in root stele of the root hair zone.

The protein localises to the secreted. The protein is Subtilisin-like protease SBT4.12 of Arabidopsis thaliana (Mouse-ear cress).